Here is a 156-residue protein sequence, read N- to C-terminus: Small ribosomal subunit protein uS7 (156 aa).

The protein belongs to the universal ribosomal protein uS7 family. Part of the 30S ribosomal subunit. Contacts proteins S9 and S11.

Its function is as follows. One of the primary rRNA binding proteins, it binds directly to 16S rRNA where it nucleates assembly of the head domain of the 30S subunit. Is located at the subunit interface close to the decoding center, probably blocks exit of the E-site tRNA. In Shewanella frigidimarina (strain NCIMB 400), this protein is Small ribosomal subunit protein uS7.